The chain runs to 313 residues: MSQEFAHLSVLLKETVDGLNIQPDGIYIDGTFGRGGHSRHVLSHLGPNGRLIAIDRDPQAIEAAKQFADDPRFQIVHGGFGQLADYVAELGLVGKIDGVLLDLGVSSPQLDDAERGFSFLRDGPLDMRMDNSQGQTAAQWIARAEIEDMAWVFKTYGEEKNSRHIARCIAADREKTPFLRTKDLADLIARITKNKERNKHPATRVFQAIRIYINSELEQIDQALEGAVNVLAPHGRMSIISFHSLEDRMVKRFMRRHSQGESVPHGLPITEAEINKSKKLKTLGKAMKPSEIEVEQNPRARSSVLRVAERLDY.

Residues 35 to 37 (GGH), D55, F80, D102, and Q109 each bind S-adenosyl-L-methionine.

The protein belongs to the methyltransferase superfamily. RsmH family.

It localises to the cytoplasm. It carries out the reaction cytidine(1402) in 16S rRNA + S-adenosyl-L-methionine = N(4)-methylcytidine(1402) in 16S rRNA + S-adenosyl-L-homocysteine + H(+). Functionally, specifically methylates the N4 position of cytidine in position 1402 (C1402) of 16S rRNA. This chain is Ribosomal RNA small subunit methyltransferase H, found in Shewanella denitrificans (strain OS217 / ATCC BAA-1090 / DSM 15013).